The sequence spans 202 residues: Transmembrane protein 223 (202 aa).

Residues 1 to 43 (MAAPWRRWPTGLLAVLRPLLTCRPLQGTTLQRDVLLFEHDRGR) are Mitochondrial matrix-facing. A helical transmembrane segment spans residues 44–64 (FFTILGLFCAGQGVFWASMAV). Residues 65–97 (AAVSRPPVPVQPLDAEVPNRGPFDLRSALWRYG) are Mitochondrial intermembrane-facing. Residues 98–118 (LAVGCGAIGALVLGAGLLFSL) traverse the membrane as a helical segment. Residues 119–202 (RSVRSVVLRA…DNTVGAYRSL (84 aa)) are Mitochondrial matrix-facing.

The protein belongs to the TMEM223 family. Associates with the mitochondrial ribosome.

The protein resides in the mitochondrion inner membrane. Its function is as follows. Mitochondrial ribosome-associated protein involved in the first steps of cytochrome c oxidase complex (complex IV) biogenesis. Stimulates the translation of MT-CO1 mRNA and is a constituent of early MT-CO1 assembly intermediates. This is Transmembrane protein 223 from Homo sapiens (Human).